Here is a 226-residue protein sequence, read N- to C-terminus: ATP synthase F(0) complex subunit a (226 aa).

6 consecutive transmembrane segments (helical) span residues 6 to 26, 68 to 88, 97 to 117, 136 to 156, 164 to 184, and 189 to 209; these read FASFIAPTMMGLPIVTLIIMF, WSLMLMSLIMFIGSTNILGLL, QLSMNLGMAIPLWSATVFTGF, LLIPMLVIIETISLFIQPVAL, ITAGHLLIHLIGGATLALLNI, and AFITFTILILLTILEFAVALI.

Belongs to the ATPase A chain family. In terms of assembly, component of the ATP synthase complex composed at least of ATP5F1A/subunit alpha, ATP5F1B/subunit beta, ATP5MC1/subunit c (homooctomer), MT-ATP6/subunit a, MT-ATP8/subunit 8, ATP5ME/subunit e, ATP5MF/subunit f, ATP5MG/subunit g, ATP5MK/subunit k, ATP5MJ/subunit j, ATP5F1C/subunit gamma, ATP5F1D/subunit delta, ATP5F1E/subunit epsilon, ATP5PF/subunit F6, ATP5PB/subunit b, ATP5PD/subunit d, ATP5PO/subunit OSCP. ATP synthase complex consists of a soluble F(1) head domain (subunits alpha(3) and beta(3)) - the catalytic core - and a membrane F(0) domain - the membrane proton channel (subunits c, a, 8, e, f, g, k and j). These two domains are linked by a central stalk (subunits gamma, delta, and epsilon) rotating inside the F1 region and a stationary peripheral stalk (subunits F6, b, d, and OSCP). Interacts with DNAJC30; interaction is direct.

It localises to the mitochondrion inner membrane. The enzyme catalyses H(+)(in) = H(+)(out). Subunit a, of the mitochondrial membrane ATP synthase complex (F(1)F(0) ATP synthase or Complex V) that produces ATP from ADP in the presence of a proton gradient across the membrane which is generated by electron transport complexes of the respiratory chain. ATP synthase complex consist of a soluble F(1) head domain - the catalytic core - and a membrane F(1) domain - the membrane proton channel. These two domains are linked by a central stalk rotating inside the F(1) region and a stationary peripheral stalk. During catalysis, ATP synthesis in the catalytic domain of F(1) is coupled via a rotary mechanism of the central stalk subunits to proton translocation. With the subunit c (ATP5MC1), forms the proton-conducting channel in the F(0) domain, that contains two crucial half-channels (inlet and outlet) that facilitate proton movement from the mitochondrial intermembrane space (IMS) into the matrix. Protons are taken up via the inlet half-channel and released through the outlet half-channel, following a Grotthuss mechanism. In Sus scrofa (Pig), this protein is ATP synthase F(0) complex subunit a.